A 453-amino-acid polypeptide reads, in one-letter code: uncharacterized protein (453 aa).

2 disordered regions span residues 140–161 (YGESKRKRSKRSSKPLPGTRPQ) and 311–332 (TTTRQPNFDKTKTPATMPSASS).

This is an uncharacterized protein from Caenorhabditis elegans.